The sequence spans 66 residues: Large ribosomal subunit protein bL35 (66 aa).

A compositionally biased stretch (basic residues) spans 1 to 16 (MPKQKTHRASAKRFKR). The segment at 1-21 (MPKQKTHRASAKRFKRTGSGG) is disordered.

Belongs to the bacterial ribosomal protein bL35 family.

The sequence is that of Large ribosomal subunit protein bL35 from Streptococcus pneumoniae serotype 2 (strain D39 / NCTC 7466).